The sequence spans 136 residues: Large ribosomal subunit protein uL16 (136 aa).

It belongs to the universal ribosomal protein uL16 family. As to quaternary structure, part of the 50S ribosomal subunit.

In terms of biological role, binds 23S rRNA and is also seen to make contacts with the A and possibly P site tRNAs. The chain is Large ribosomal subunit protein uL16 from Enterobacter sp. (strain 638).